A 254-amino-acid polypeptide reads, in one-letter code: Triosephosphate isomerase (254 aa).

9–11 (NWK) lines the substrate pocket. H96 acts as the Electrophile in catalysis. E169 (proton acceptor) is an active-site residue. Substrate-binding positions include G175, S215, and 236–237 (GG).

Belongs to the triosephosphate isomerase family. Homodimer.

Its subcellular location is the cytoplasm. The enzyme catalyses D-glyceraldehyde 3-phosphate = dihydroxyacetone phosphate. The protein operates within carbohydrate biosynthesis; gluconeogenesis. It participates in carbohydrate degradation; glycolysis; D-glyceraldehyde 3-phosphate from glycerone phosphate: step 1/1. In terms of biological role, involved in the gluconeogenesis. Catalyzes stereospecifically the conversion of dihydroxyacetone phosphate (DHAP) to D-glyceraldehyde-3-phosphate (G3P). This is Triosephosphate isomerase from Borrelia recurrentis (strain A1).